A 171-amino-acid chain; its full sequence is Shikimate kinase (171 aa).

14–19 (GAGKST) provides a ligand contact to ATP. S18 contacts Mg(2+). Positions 36, 60, and 82 each coordinate substrate. R120 serves as a coordination point for ATP. R139 contacts substrate. Q156 serves as a coordination point for ATP.

The protein belongs to the shikimate kinase family. As to quaternary structure, monomer. It depends on Mg(2+) as a cofactor.

The protein localises to the cytoplasm. It catalyses the reaction shikimate + ATP = 3-phosphoshikimate + ADP + H(+). Its pathway is metabolic intermediate biosynthesis; chorismate biosynthesis; chorismate from D-erythrose 4-phosphate and phosphoenolpyruvate: step 5/7. In terms of biological role, catalyzes the specific phosphorylation of the 3-hydroxyl group of shikimic acid using ATP as a cosubstrate. In Shewanella sediminis (strain HAW-EB3), this protein is Shikimate kinase.